The sequence spans 363 residues: G kinase-anchoring protein 1 (363 aa).

Residues 1-93 (MASAVLSSVP…SHAICNAQHE (93 aa)) form an interaction with IRS1 region. Disordered stretches follow at residues 20-111 (QVDS…NWQE) and 145-171 (EYEN…HQGK). Phosphoserine is present on residues Ser-23, Ser-25, and Ser-27. A compositionally biased stretch (polar residues) spans 39–48 (TGKSQTNKST). The stretch at 43–75 (QTNKSTTNEKKREKRRKKKEQQQSEANELRNLA) forms a coiled coil. Over residues 102-111 (KDSREENWQE) the composition is skewed to basic and acidic residues. At Ser-104 the chain carries Phosphoserine; by PKG. Coiled-coil stretches lie at residues 126–158 (ADLE…QSKV) and 240–350 (EHNQ…YQGG).

Belongs to the GKAP1 family. Interacts with PRKG1 and IRS1.

The protein resides in the golgi apparatus. In terms of biological role, regulates insulin-dependent IRS1 tyrosine phosphorylation in adipocytes by modulating the availability of IRS1 to IR tyrosine kinase. Its association with IRS1 is required for insulin-induced translocation of SLC2A4 to the cell membrane. Involved in TNF-induced impairment of insulin-dependent IRS1 tyrosine phosphorylation. This is G kinase-anchoring protein 1 (GKAP1) from Bos taurus (Bovine).